The sequence spans 621 residues: DnaJ homolog subfamily C member 2 (621 aa).

Position 1 is an N-acetylmethionine (M1). 4 positions are modified to phosphoserine: S47, S49, S60, and S63. The 74-residue stretch at 88–161 (DHYAVLGLGH…VKRRAFNSVD (74 aa)) folds into the J domain. Residues 160 to 250 (VDPTFDNSVP…RDERKWIEKQ (91 aa)) form a ZRF1-UBD region. S183 bears the Phosphoserine mark. Disordered regions lie at residues 287–312 (GKAKKEAEKRAKAEARRKEQEAKEKQ) and 426–453 (KEEADARMRQASKNAEKSTGGSGSGSKN). SANT domains follow at residues 449 to 511 (SGSK…KLDP) and 549 to 604 (IDSI…EMVK).

Component of ribosome-associated complex (RAC), a heterodimer composed of Hsp70/DnaK-type chaperone HSPA14 and Hsp40/DnaJ-type chaperone DNAJC2. Interacts (via ZRF1-UBD region) with ID1. Post-translationally, phosphorylated in M (mitotic) phase.

The protein resides in the nucleus. It is found in the cytoplasm. Its subcellular location is the cytosol. In terms of biological role, acts both as a chaperone in the cytosol and as a chromatin regulator in the nucleus. When cytosolic, acts as a molecular chaperone: component of the ribosome-associated complex (RAC), a complex involved in folding or maintaining nascent polypeptides in a folding-competent state. In the RAC complex, stimulates the ATPase activity of the ribosome-associated pool of Hsp70-type chaperones HSPA14 that bind to the nascent polypeptide chain. When nuclear, mediates the switching from polycomb-repressed genes to an active state: specifically recruited at histone H2A ubiquitinated at 'Lys-119' (H2AK119ub), and promotes the displacement of the polycomb PRC1 complex from chromatin, thereby facilitating transcription activation. The sequence is that of DnaJ homolog subfamily C member 2 (Dnajc2) from Rattus norvegicus (Rat).